The following is a 539-amino-acid chain: CTP synthase (539 aa).

The tract at residues 1–268 is amidoligase domain; sequence MSFKSIFLTG…SDFLLNKLGF (268 aa). Position 14 (serine 14) interacts with CTP. Serine 14 serves as a coordination point for UTP. 15–20 contacts ATP; it reads SLGKGL. Position 55 (tyrosine 55) interacts with L-glutamine. Position 72 (aspartate 72) interacts with ATP. Residues aspartate 72 and glutamate 142 each coordinate Mg(2+). CTP contacts are provided by residues 149–151, 188–193, and lysine 224; these read DIE and KTKPTQ. Residues 188-193 and lysine 224 each bind UTP; that span reads KTKPTQ. Leucine 242 lines the ATP pocket. Positions 294–532 constitute a Glutamine amidotransferase type-1 domain; it reads RIGLVGKYLE…IRAAKAYSLE (239 aa). Residue glycine 353 participates in L-glutamine binding. The Nucleophile; for glutamine hydrolysis role is filled by cysteine 380. Residues 381 to 384, glutamate 404, and arginine 460 each bind L-glutamine; that span reads LGMQ. Active-site residues include histidine 505 and glutamate 507.

The protein belongs to the CTP synthase family. In terms of assembly, homotetramer.

The enzyme catalyses UTP + L-glutamine + ATP + H2O = CTP + L-glutamate + ADP + phosphate + 2 H(+). It carries out the reaction L-glutamine + H2O = L-glutamate + NH4(+). The catalysed reaction is UTP + NH4(+) + ATP = CTP + ADP + phosphate + 2 H(+). The protein operates within pyrimidine metabolism; CTP biosynthesis via de novo pathway; CTP from UDP: step 2/2. With respect to regulation, allosterically activated by GTP, when glutamine is the substrate; GTP has no effect on the reaction when ammonia is the substrate. The allosteric effector GTP functions by stabilizing the protein conformation that binds the tetrahedral intermediate(s) formed during glutamine hydrolysis. Inhibited by the product CTP, via allosteric rather than competitive inhibition. In terms of biological role, catalyzes the ATP-dependent amination of UTP to CTP with either L-glutamine or ammonia as the source of nitrogen. May be involved in lipopolysaccharide biosynthesis, potentially channelling CTP directly to CMP-KDO synthetase. Regulates intracellular CTP levels through interactions with the four ribonucleotide triphosphates. The sequence is that of CTP synthase from Chlamydia trachomatis serovar D (strain ATCC VR-885 / DSM 19411 / UW-3/Cx).